The following is a 166-amino-acid chain: Small ribosomal subunit protein uS5 (166 aa).

The 64-residue stretch at 12-75 (YIEKLVQVNR…EAARRNMIQV (64 aa)) folds into the S5 DRBM domain.

The protein belongs to the universal ribosomal protein uS5 family. Part of the 30S ribosomal subunit. Contacts proteins S4 and S8.

Functionally, with S4 and S12 plays an important role in translational accuracy. Its function is as follows. Located at the back of the 30S subunit body where it stabilizes the conformation of the head with respect to the body. The chain is Small ribosomal subunit protein uS5 from Pseudomonas syringae pv. tomato (strain ATCC BAA-871 / DC3000).